The chain runs to 1262 residues: DNA-directed RNA polymerase subunit beta' (1262 aa).

Residues C220, C294, C301, and C304 each contribute to the Zn(2+) site.

This sequence belongs to the RNA polymerase beta' chain family. RpoC2 subfamily. In cyanobacteria the RNAP catalytic core is composed of 2 alpha, 1 beta, 1 beta', 1 gamma and 1 omega subunit. When a sigma factor is associated with the core the holoenzyme is formed, which can initiate transcription. It depends on Zn(2+) as a cofactor.

The enzyme catalyses RNA(n) + a ribonucleoside 5'-triphosphate = RNA(n+1) + diphosphate. Its function is as follows. DNA-dependent RNA polymerase catalyzes the transcription of DNA into RNA using the four ribonucleoside triphosphates as substrates. This is DNA-directed RNA polymerase subunit beta' from Gloeobacter violaceus (strain ATCC 29082 / PCC 7421).